The sequence spans 434 residues: Na(+)/H(+) antiporter NhaA 1 (434 aa).

10 helical membrane passes run 30–50 (TGGL…NVAG), 70–90 (LSIE…VTGL), 108–128 (ALPI…FVLV), 141–161 (VGWA…LAVV), 172–192 (FLLT…AIFY), 195–215 (QVHW…TVAV), 286–306 (FAVP…VSGF), 318–338 (VIAG…WLLA), 354–374 (VLGM…IGSL), and 386–406 (VTLG…VVLS).

Belongs to the NhaA Na(+)/H(+) (TC 2.A.33) antiporter family.

The protein resides in the cell membrane. It carries out the reaction Na(+)(in) + 2 H(+)(out) = Na(+)(out) + 2 H(+)(in). Its function is as follows. Na(+)/H(+) antiporter that extrudes sodium in exchange for external protons. The protein is Na(+)/H(+) antiporter NhaA 1 of Kineococcus radiotolerans (strain ATCC BAA-149 / DSM 14245 / SRS30216).